Here is a 22-residue protein sequence, read N- to C-terminus: Bacteriocin serracin-P 23 kDa subunit (22 aa).

Major component of a prophage tail tube. Its function is as follows. Antibacterial activity against Gram-negative bacterium E.amylovora. The polypeptide is Bacteriocin serracin-P 23 kDa subunit (Serratia plymuthica).